A 305-amino-acid polypeptide reads, in one-letter code: Tetraspanin-12 (305 aa).

Residues 1-12 (MAREDSVKCLRC) are Cytoplasmic-facing. 2 S-palmitoyl cysteine lipidation sites follow: cysteine 9 and cysteine 12. Residues 13 to 33 (LLYALNLLFWLMSISVLAVSA) traverse the membrane as a helical segment. At 34 to 59 (WMRDYLNNVLTLTAETRVEEAVILTY) the chain is on the extracellular side. Residues 60 to 80 (FPVVHPVMIAVCCFLIIVGML) form a helical membrane-spanning segment. Cysteine 83 carries the S-palmitoyl cysteine lipid modification. Residues 90-110 (LLLLAWYFGTLLVIFCVELAC) form a helical membrane-spanning segment. Residues 111 to 224 (GVWTYEQEVM…RGTKQLQVLR (114 aa)) are Extracellular-facing. A helical transmembrane segment spans residues 225-245 (FLGISIGVTQILAMILTITLL). Residues 246 to 305 (WALYYDRREPGTDQMLSLKNDASQHLSCHSVELLKPSLSRIFEHTSMANSFNTHFEMEEL) are Cytoplasmic-facing.

It belongs to the tetraspanin (TM4SF) family. Component of a complex, at least composed of TSPAN12, FZD4 and norrin (NDP). Interacts (when palmitoylated) with ADAM10. Interacts with MMP14/MT1-MMP. Post-translationally, palmitoylated; required for interaction with ADAM10. The precise position of palmitoylated residues is unclear and occurs either on Cys-9, Cys-12 and/or Cys-83.

It localises to the cell membrane. In terms of biological role, regulator of cell surface receptor signal transduction. Plays a central role in retinal vascularization by regulating norrin (NDP) signal transduction. Acts in concert with norrin (NDP) to promote FZD4 multimerization and subsequent activation of FZD4, leading to promote accumulation of beta-catenin (CTNNB1) and stimulate LEF/TCF-mediated transcriptional programs. Suprisingly, it only activates the norrin (NDP)-dependent activation of FZD4, while it does not activate the Wnt-dependent activation of FZD4, suggesting the existence of a Wnt-independent signaling that also promote accumulation the beta-catenin (CTNNB1). Acts as a regulator of membrane proteinases such as ADAM10 and MMP14/MT1-MMP. Activates ADAM10-dependent cleavage activity of amyloid precursor protein (APP). Activates MMP14/MT1-MMP-dependent cleavage activity. This chain is Tetraspanin-12 (Tspan12), found in Rattus norvegicus (Rat).